The following is a 261-amino-acid chain: Glucose 1-dehydrogenase 3 (261 aa).

Val-11–Val-35 serves as a coordination point for NAD(+). Ser-145 lines the substrate pocket. Tyr-158 acts as the Proton acceptor in catalysis.

This sequence belongs to the short-chain dehydrogenases/reductases (SDR) family. As to quaternary structure, homotetramer.

It carries out the reaction D-glucose + NAD(+) = D-glucono-1,5-lactone + NADH + H(+). The catalysed reaction is D-glucose + NADP(+) = D-glucono-1,5-lactone + NADPH + H(+). This Priestia megaterium (Bacillus megaterium) protein is Glucose 1-dehydrogenase 3 (gdhIII).